A 468-amino-acid polypeptide reads, in one-letter code: Putative BTB/POZ domain and WD-repeat protein R154 (468 aa).

Positions serine 14–glutamate 85 constitute a BTB domain. WD repeat units lie at residues histidine 194–asparagine 233, aspartate 354–serine 398, and leucine 401–threonine 440.

Belongs to the mimivirus BTB/WD family.

The protein is Putative BTB/POZ domain and WD-repeat protein R154 of Acanthamoeba polyphaga (Amoeba).